A 458-amino-acid chain; its full sequence is Succinate-semialdehyde dehydrogenase [NADP(+)] 1 (458 aa).

Residues Trp134–Asn135, Lys158–Ser161, and Gly210–Ser211 contribute to the NADP(+) site. Catalysis depends on Glu232, which acts as the Proton acceptor. Leu233 serves as a coordination point for NADP(+). Catalysis depends on Cys266, which acts as the Nucleophile. Glu363 contributes to the NADP(+) binding site.

It belongs to the aldehyde dehydrogenase family.

The catalysed reaction is succinate semialdehyde + NADP(+) + H2O = succinate + NADPH + 2 H(+). In terms of biological role, catalyzes the NADP(+)-dependent oxidation of succinate semialdehyde to succinate. It is believed to be the main source of succinate semialdehyde dehydrogenase activity in Mycobacterium. The chain is Succinate-semialdehyde dehydrogenase [NADP(+)] 1 (gabD1) from Mycobacterium ulcerans (strain Agy99).